Here is a 62-residue protein sequence, read N- to C-terminus: Defensin-like protein A (62 aa).

The N-terminal stretch at 1 to 26 is a signal peptide; sequence MRCVVLFMVSCLLIVLLINHFEEVEA. Residues cysteine 42 and cysteine 52 are joined by a disulfide bond.

The protein belongs to the DEFL family.

The protein localises to the secreted. Its function is as follows. Truncated and inactivated form of SCRA, a protein involved in male-mediated self-incompatibility when active. Most A.thaliana cultivars contain such an inactive form and thus, are self-fertiles. The polypeptide is Defensin-like protein A (SCRA) (Arabidopsis thaliana (Mouse-ear cress)).